The primary structure comprises 466 residues: 3-isopropylmalate dehydratase large subunit (466 aa).

Residues Cys347, Cys407, and Cys410 each coordinate [4Fe-4S] cluster.

Belongs to the aconitase/IPM isomerase family. LeuC type 1 subfamily. Heterodimer of LeuC and LeuD. The cofactor is [4Fe-4S] cluster.

The enzyme catalyses (2R,3S)-3-isopropylmalate = (2S)-2-isopropylmalate. The protein operates within amino-acid biosynthesis; L-leucine biosynthesis; L-leucine from 3-methyl-2-oxobutanoate: step 2/4. Its function is as follows. Catalyzes the isomerization between 2-isopropylmalate and 3-isopropylmalate, via the formation of 2-isopropylmaleate. This Shigella flexneri protein is 3-isopropylmalate dehydratase large subunit.